Here is a 433-residue protein sequence, read N- to C-terminus: MKPNLNHRSNEPNCKGVEILSIGTELLLGNIVNTNAQWISEELSALGLNHFRQSTIGDNSKRISNLIKEISLRSDLLITTGGLGPTPDDLTTEAIAKSFNVTLYERESLWDEIKKKLSLSSSIQNNSSLKKQCFFPKDAQIIHNPRGTAPGMIWKPKKGFTILTFPGVPSEMKVMWKETAIDYIQKNFSDGYIFFSNTLNFSGIGESKVSEKIDNLLKLKNPTVAPYANLGELKLRITARATNELQAKNLIKPVKEELKKEFSKFIFGEDNETLSSVLIKELLKRKESLGFAESCTGGLLSSTITKVSGSSQVFKGSIISYSNELKQSLLNIPEDRIKKYGAVSEEIAQDMTINAREKLNSDWSIAISGIAGPSGGSKEKPVGIVYISIAGPNNHITNIKKIFSSTRNRVEIQRLSVNVCLNSLRLILLSKSK.

It belongs to the CinA family.

The sequence is that of CinA-like protein from Prochlorococcus marinus (strain MIT 9515).